The following is a 422-amino-acid chain: Pre-B-cell leukemia transcription factor 2 (422 aa).

The interval 1–43 (MDEQGRLMQARGVGIPGHPIHGGPQTLTPHPMHEPPADNGEPR) is disordered. Residues 31–43 (PMHEPPADNGEPR) show a composition bias toward basic and acidic residues. In terms of domain architecture, PBC spans 42-236 (PRKQDIGDIL…VMILRSRFLD (195 aa)). The tract at residues 49–128 (DILQQIMTIT…EGVAGPEKGG (80 aa)) is PBC-A. Positions 131–236 (AAAAAAAAAS…VMILRSRFLD (106 aa)) are PBC-B. The homeobox DNA-binding region spans 237–299 (ARRKRRNFSK…NKRIRYKKNI (63 aa)). Disordered regions lie at residues 319 to 341 (QGGH…GSFN) and 353 to 422 (QGLN…DTSN). Positions 401–410 (VTPSSVTSPT) are enriched in polar residues.

This sequence belongs to the TALE/PBX homeobox family.

It localises to the nucleus. Functionally, transcriptional activator that binds the sequence 5'-ATCAATCAA-3'. This Xenopus tropicalis (Western clawed frog) protein is Pre-B-cell leukemia transcription factor 2.